A 202-amino-acid chain; its full sequence is Mitochondrial import receptor subunit TOM20-3 (202 aa).

N-acetylmethionine is present on Met-1. The Cytoplasmic segment spans residues 1–174 (MDTETEFDRI…NKKSSDAKYD (174 aa)). 2 TPR repeats span residues 38–74 (GGVL…DPKK) and 86–119 (TSFA…QPDN). Residues 146–166 (SQPMGRVEAPAPPSSKAVKNK) are disordered. Residues 175-192 (AMGWVILAIGVVAWISFA) form a helical membrane-spanning segment. At 193–202 (KANVPVSPPR) the chain is on the mitochondrial intermembrane side.

Belongs to the Tom20 family. As to quaternary structure, forms part of the preprotein translocase complex of the outer mitochondrial membrane (TOM complex) which consists of at least 6 different proteins (TOM5, TOM6, TOM7, TOM20, TOM22/TOM9 and TOM40). Component of a mitochondrial large protein complex that contains, at least, MIC60, DGS1, TOM40, TOM20 proteins, and petC/RISP. The N-terminus is blocked. In terms of tissue distribution, expressed in roots, flowers, young cotyledons and leaves.

It localises to the mitochondrion outer membrane. In terms of biological role, central component of the receptor complex responsible for the recognition and translocation of cytosolically synthesized mitochondrial preproteins. Together with TOM22 functions as the transit peptide receptor at the surface of the mitochondrion outer membrane and facilitates the movement of preproteins into the translocation pore. In Arabidopsis thaliana (Mouse-ear cress), this protein is Mitochondrial import receptor subunit TOM20-3.